Reading from the N-terminus, the 264-residue chain is ATP synthase subunit a (264 aa).

The next 6 membrane-spanning stretches (helical) occupy residues 29–49, 90–110, 134–154, 177–197, 208–228, and 235–255; these read TWHI…LWIF, IAPL…MDMI, DVNI…FYSI, IPVN…SLAL, LIFI…TLGV, and LIFH…LTIV.

This sequence belongs to the ATPase A chain family. As to quaternary structure, F-type ATPases have 2 components, CF(1) - the catalytic core - and CF(0) - the membrane proton channel. CF(1) has five subunits: alpha(3), beta(3), gamma(1), delta(1), epsilon(1). CF(0) has three main subunits: a(1), b(2) and c(9-12). The alpha and beta chains form an alternating ring which encloses part of the gamma chain. CF(1) is attached to CF(0) by a central stalk formed by the gamma and epsilon chains, while a peripheral stalk is formed by the delta and b chains.

The protein localises to the cell inner membrane. Key component of the proton channel; it plays a direct role in the translocation of protons across the membrane. The polypeptide is ATP synthase subunit a (Shewanella baltica (strain OS223)).